Reading from the N-terminus, the 309-residue chain is Malate dehydrogenase (309 aa).

NAD(+) is bound by residues 6–11 (GSGRVG) and aspartate 31. The substrate site is built by arginine 80 and arginine 86. NAD(+)-binding positions include asparagine 93 and 116–118 (TTN). The substrate site is built by asparagine 118 and arginine 149. The Proton acceptor role is filled by histidine 173.

This sequence belongs to the LDH/MDH superfamily. As to quaternary structure, homotetramer.

It carries out the reaction (S)-malate + NAD(+) = oxaloacetate + NADH + H(+). Functionally, catalyzes the reversible oxidation of malate to oxaloacetate. Exhibits higher specific activity for oxaloacetate reduction than for malate oxidation in vitro. Has a strong preference for NAD. Can use NADPH for oxaloacetate reduction, but activity decreases more than 90%. No activity detected with NADP(+) and malate. The polypeptide is Malate dehydrogenase (Pyrobaculum islandicum (strain DSM 4184 / JCM 9189 / GEO3)).